Reading from the N-terminus, the 160-residue chain is Cytochrome c-type biogenesis protein CcmE (160 aa).

Over 1-8 (MNPRRKQR) the chain is Cytoplasmic. Residues 9 to 29 (LTWVAILVIGVSVATGLMLYA) form a helical; Signal-anchor for type II membrane protein membrane-spanning segment. Residues 30–160 (LSQSIDLFYT…PNTVEKGEGQ (131 aa)) are Periplasmic-facing. Heme is bound by residues His130 and Tyr134.

This sequence belongs to the CcmE/CycJ family.

The protein localises to the cell inner membrane. Functionally, heme chaperone required for the biogenesis of c-type cytochromes. Transiently binds heme delivered by CcmC and transfers the heme to apo-cytochromes in a process facilitated by CcmF and CcmH. The polypeptide is Cytochrome c-type biogenesis protein CcmE (Idiomarina loihiensis (strain ATCC BAA-735 / DSM 15497 / L2-TR)).